A 353-amino-acid polypeptide reads, in one-letter code: Mitogen-activated protein kinase FUS3 (353 aa).

The Protein kinase domain maps to Phe-13–Leu-309. Residues Leu-19–Val-27 and Lys-42 contribute to the ATP site. Catalysis depends on Asp-137, which acts as the Proton acceptor. The residue at position 180 (Thr-180) is a Phosphothreonine. Residues Thr-180 to Tyr-182 carry the TXY motif. The residue at position 182 (Tyr-182) is a Phosphotyrosine. A Glycyl lysine isopeptide (Lys-Gly) (interchain with G-Cter in ubiquitin) cross-link involves residue Lys-345.

It belongs to the protein kinase superfamily. CMGC Ser/Thr protein kinase family. MAP kinase subfamily. As to quaternary structure, in the nucleus, FUS3 forms a complex with DIG1, DIG2 and STE12. The interaction of FUS3 with STE12 depends on the presence of both DIG1 and DIG2. STE12 is lost from FUS3/DIG1/DIG2 complex after pheromone treatment. During its activation and phosphorylation, FUS3 forms a membrane-associated complex with the scaffold protein STE5, the MAPKK STE7, the MAPKKK STE11, and the G-protein beta subunit GBB/STE4; interacting directly with STE7 and STE5. The cofactor is Mg(2+). In terms of processing, dually phosphorylated on Thr-180 and Tyr-182 by STE7 in response to pheromone induction, which activates the enzyme. Activated FUS3 initiates a feedback signal, down-regulating phosphorylation of both, FUS3 and KSS1.

The protein resides in the nucleus. It is found in the cytoplasm. Its subcellular location is the periplasm. The enzyme catalyses L-seryl-[protein] + ATP = O-phospho-L-seryl-[protein] + ADP + H(+). The catalysed reaction is L-threonyl-[protein] + ATP = O-phospho-L-threonyl-[protein] + ADP + H(+). Activated by tyrosine and threonine phosphorylation after pheromone treatment. Functionally, together with closely related KSS1, FUS3 is the final kinase in the signal transduction cascade regulating activation/repression of the mating and filamentation pathways, induced by pheromone and nitrogen/carbon limitation, respectively. Phosphorylated FUS3 activates the mating but suppresses the filamentation pathway, whereas activated KSS1 activates both pathways. Pheromone-activated FUS3 functions by inhibiting the binding of the transcriptional activator STE12 to filamentation specific genes while inducing its binding to and activity at mating specific genes. Non-activated FUS3 has a repressive effect on STE12 transcriptional activity. KSS1 can partially compensate for the lack of FUS3 but mating efficiency is reduced and the filamentation program is partially activated upon pheromone signaling. FUS3 phosphorylates STE7, STE5, FAR1, DIG1, DIG2 and STE12. The sequence is that of Mitogen-activated protein kinase FUS3 (FUS3) from Saccharomyces cerevisiae (strain ATCC 204508 / S288c) (Baker's yeast).